The following is a 100-amino-acid chain: Large ribosomal subunit protein bL28 (100 aa).

Belongs to the bacterial ribosomal protein bL28 family.

This is Large ribosomal subunit protein bL28 from Ehrlichia chaffeensis (strain ATCC CRL-10679 / Arkansas).